Reading from the N-terminus, the 506-residue chain is Lysine--tRNA ligase (506 aa).

Mg(2+) contacts are provided by glutamate 411 and glutamate 418.

Belongs to the class-II aminoacyl-tRNA synthetase family. Homodimer. Requires Mg(2+) as cofactor.

The protein resides in the cytoplasm. The enzyme catalyses tRNA(Lys) + L-lysine + ATP = L-lysyl-tRNA(Lys) + AMP + diphosphate. The polypeptide is Lysine--tRNA ligase (Thermosynechococcus vestitus (strain NIES-2133 / IAM M-273 / BP-1)).